The following is a 464-amino-acid chain: ATP-dependent protease ATPase subunit HslU (464 aa).

ATP contacts are provided by residues valine 18, 60–65 (GVGKTE), aspartate 277, glutamate 342, and arginine 414.

The protein belongs to the ClpX chaperone family. HslU subfamily. A double ring-shaped homohexamer of HslV is capped on each side by a ring-shaped HslU homohexamer. The assembly of the HslU/HslV complex is dependent on binding of ATP.

It localises to the cytoplasm. Its function is as follows. ATPase subunit of a proteasome-like degradation complex; this subunit has chaperone activity. The binding of ATP and its subsequent hydrolysis by HslU are essential for unfolding of protein substrates subsequently hydrolyzed by HslV. HslU recognizes the N-terminal part of its protein substrates and unfolds these before they are guided to HslV for hydrolysis. This chain is ATP-dependent protease ATPase subunit HslU, found in Lactobacillus delbrueckii subsp. bulgaricus (strain ATCC 11842 / DSM 20081 / BCRC 10696 / JCM 1002 / NBRC 13953 / NCIMB 11778 / NCTC 12712 / WDCM 00102 / Lb 14).